The chain runs to 263 residues: MNPNCARCGKIVYPTEKVNCLDKFWHKACFHCETCKMTLNMKNYKGYEKKPYCNAHYPKQSFTMVADTPENLRLKQQSELQSQVRYKEEFEKNKGKGFSVVADTPELQRIKKTQDQISNIKYHEEFEKSRMGPSGGEGIEPERREAQDSSSYRRPTEQQQPQPHHIPTSAPVYQQPQQQQVTPSYGGYKEPAAPVSIQRSAPGGGGKRYRAVYDYSAADEDEVSFQDGDTIVNVQQIDDGWMYGTVERTGDTGMLPANYVEAI.

Met1 bears the N-acetylmethionine mark. In terms of domain architecture, LIM zinc-binding spans 3–63; it reads PNCARCGKIV…NAHYPKQSFT (61 aa). Lys42 is modified (N6-acetyllysine). 2 Nebulin repeats span residues 64 to 95 and 97 to 131; these read MVADTPENLRLKQQSELQSQVRYKEEFEKNKG and GFSVVADTPELQRIKKTQDQISNIKYHEEFEKSRM. A Phosphothreonine modification is found at Thr68. Position 75 is an N6-methyllysine (Lys75). Ser99 bears the Phosphoserine mark. Residue Thr104 is modified to Phosphothreonine. Lys112 bears the N6-succinyllysine mark. Phosphoserine occurs at positions 118 and 134. Residues 122–207 form a disordered region; the sequence is YHEEFEKSRM…QRSAPGGGGK (86 aa). Residues 148 to 162 show a composition bias toward polar residues; the sequence is DSSSYRRPTEQQQPQ. The region spanning 204-263 is the SH3 domain; sequence GGGKRYRAVYDYSAADEDEVSFQDGDTIVNVQQIDDGWMYGTVERTGDTGMLPANYVEAI.

In terms of assembly, interacts with F-actin. Interacts with ANKRD54. Interacts with KBTBD10. Phosphorylated. In terms of tissue distribution, expressed in a wide range of tissues (but not the heart or skeletal muscle), the expression is specific for certain actin-rich cell types within these tissues. Expression is prominent in the cortical regions of ion-transporting duct cells in the pancreas, in the salivary parotid gland and in certain F-actin-rich cells in the distal tubule/collecting duct. In primary cultures of gastric fibroblasts, expression is mainly within the tips of lamellipodia and at the leading edges of membrane ruffles.

Its subcellular location is the cytoplasm. It is found in the cell cortex. The protein resides in the cytoskeleton. Functionally, plays an important role in the regulation of dynamic actin-based, cytoskeletal activities. Agonist-dependent changes in LASP1 phosphorylation may also serve to regulate actin-associated ion transport activities, not only in the parietal cell but also in certain other F-actin-rich secretory epithelial cell types. The sequence is that of LIM and SH3 domain protein 1 from Rattus norvegicus (Rat).